A 266-amino-acid polypeptide reads, in one-letter code: Beta-lactamase OXA-19 (266 aa).

Residues 1–20 (MKTFAAYVITACLSSTALAS) form the signal peptide. Ser67 functions as the Acyl-ester intermediate in the catalytic mechanism. Residue Lys70 is modified to N6-carboxylysine. Residue 205–207 (KTG) coordinates substrate.

The protein belongs to the class-D beta-lactamase family.

It carries out the reaction a beta-lactam + H2O = a substituted beta-amino acid. The protein is Beta-lactamase OXA-19 (bla) of Pseudomonas aeruginosa.